A 20-amino-acid chain; its full sequence is Agglutinin beta-2 chain isoform 1 (20 aa).

Positions 1-10 (TQSTGTSQTI) are enriched in polar residues. Positions 1–20 (TQSTGTSQTIAVGLWGGPDN) are disordered.

Belongs to the jacalin lectin family. As to quaternary structure, tetramer of four alpha chains associated with two or four beta chains.

Alpha-methyl-D-mannoside and D-mannose specific lectin. Binds IgA. The sequence is that of Agglutinin beta-2 chain isoform 1 from Morus nigra (Black mulberry).